A 170-amino-acid chain; its full sequence is MKKKNGRDSKELADFALGESQTNYPETYAPEVLEAFDNKNPGKIAWTTFVCTEFTSLCPKTRQPDFAKIFINYIADKKMVESKSLKLYLFSFRNHGDFHEDCVQTICDDLVKLMKPKYIEVIGEFTPRGGIAIYPYANYAAKDKFFQELYKKRMSEYAPGKYSMELSKLY.

C58 serves as the catalytic Thioimide intermediate. Residue D65 is the Proton donor of the active site. Residues 80–82 and 99–100 contribute to the substrate site; these read VES and HE.

This sequence belongs to the GTP cyclohydrolase I family. QueF type 1 subfamily.

The protein resides in the cytoplasm. It carries out the reaction 7-aminomethyl-7-carbaguanine + 2 NADP(+) = 7-cyano-7-deazaguanine + 2 NADPH + 3 H(+). Its pathway is tRNA modification; tRNA-queuosine biosynthesis. In terms of biological role, catalyzes the NADPH-dependent reduction of 7-cyano-7-deazaguanine (preQ0) to 7-aminomethyl-7-deazaguanine (preQ1). In Bdellovibrio bacteriovorus (strain ATCC 15356 / DSM 50701 / NCIMB 9529 / HD100), this protein is NADPH-dependent 7-cyano-7-deazaguanine reductase.